Consider the following 615-residue polypeptide: RNA polymerase sigma factor RpoD (615 aa).

The disordered stretch occupies residues 166–216 (GYIDPDDGITPPAAEVPPPVDTKTAKADDDSEDEEAEATEDEEEAESGPDP). Residues 194–212 (DDSEDEEAEATEDEEEAES) show a composition bias toward acidic residues. The sigma-70 factor domain-2 stretch occupies residues 381–451 (MVEANLRLVI…TRSIADQART (71 aa)). Positions 405-408 (DLIQ) match the Interaction with polymerase core subunit RpoC motif. A sigma-70 factor domain-3 region spans residues 460–536 (ETINKLNRIS…DSTMQSPIDV (77 aa)). Residues 549–602 (VLSGLTAREAKVLRMRFGIDMNTDHTLEEVGKQFDVTRERIRQIEAKALRKLRH) form a sigma-70 factor domain-4 region. The segment at residues 575 to 594 (LEEVGKQFDVTRERIRQIEA) is a DNA-binding region (H-T-H motif).

The protein belongs to the sigma-70 factor family. RpoD/SigA subfamily. Interacts transiently with the RNA polymerase catalytic core.

The protein resides in the cytoplasm. In terms of biological role, sigma factors are initiation factors that promote the attachment of RNA polymerase to specific initiation sites and are then released. This sigma factor is the primary sigma factor during exponential growth. This chain is RNA polymerase sigma factor RpoD, found in Pseudomonas protegens (strain DSM 19095 / LMG 27888 / CFBP 6595 / CHA0).